Here is a 246-residue protein sequence, read N- to C-terminus: 1-(5-phosphoribosyl)-5-[(5-phosphoribosylamino)methylideneamino] imidazole-4-carboxamide isomerase (246 aa).

The active-site Proton acceptor is Asp-8. Asp-131 functions as the Proton donor in the catalytic mechanism.

The protein belongs to the HisA/HisF family.

Its subcellular location is the cytoplasm. The enzyme catalyses 1-(5-phospho-beta-D-ribosyl)-5-[(5-phospho-beta-D-ribosylamino)methylideneamino]imidazole-4-carboxamide = 5-[(5-phospho-1-deoxy-D-ribulos-1-ylimino)methylamino]-1-(5-phospho-beta-D-ribosyl)imidazole-4-carboxamide. The protein operates within amino-acid biosynthesis; L-histidine biosynthesis; L-histidine from 5-phospho-alpha-D-ribose 1-diphosphate: step 4/9. This Lactococcus lactis subsp. cremoris (strain SK11) protein is 1-(5-phosphoribosyl)-5-[(5-phosphoribosylamino)methylideneamino] imidazole-4-carboxamide isomerase.